A 384-amino-acid chain; its full sequence is Galactokinase (384 aa).

34–37 (EHTD) provides a ligand contact to substrate. 123–129 (SSGLSSS) is an ATP binding site. Residues Ser129 and Glu161 each coordinate Mg(2+). Asp173 functions as the Proton acceptor in the catalytic mechanism. A substrate-binding site is contributed by Tyr222.

It belongs to the GHMP kinase family. GalK subfamily.

It localises to the cytoplasm. The enzyme catalyses alpha-D-galactose + ATP = alpha-D-galactose 1-phosphate + ADP + H(+). Its pathway is carbohydrate metabolism; galactose metabolism. In terms of biological role, catalyzes the transfer of the gamma-phosphate of ATP to D-galactose to form alpha-D-galactose-1-phosphate (Gal-1-P). The chain is Galactokinase from Actinobacillus pleuropneumoniae serotype 3 (strain JL03).